Reading from the N-terminus, the 201-residue chain is dTTP/UTP pyrophosphatase (201 aa).

Asp-81 acts as the Proton acceptor in catalysis.

Belongs to the Maf family. YhdE subfamily. It depends on a divalent metal cation as a cofactor.

It is found in the cytoplasm. It catalyses the reaction dTTP + H2O = dTMP + diphosphate + H(+). The enzyme catalyses UTP + H2O = UMP + diphosphate + H(+). In terms of biological role, nucleoside triphosphate pyrophosphatase that hydrolyzes dTTP and UTP. May have a dual role in cell division arrest and in preventing the incorporation of modified nucleotides into cellular nucleic acids. The protein is dTTP/UTP pyrophosphatase of Dechloromonas aromatica (strain RCB).